A 282-amino-acid chain; its full sequence is Protease HtpX homolog (282 aa).

A run of 2 helical transmembrane segments spans residues 6–26 and 28–48; these read TFIL…LIGG and QGVI…YFFS. Residue His130 participates in Zn(2+) binding. The active site involves Glu131. A Zn(2+)-binding site is contributed by His134. The next 2 membrane-spanning stretches (helical) occupy residues 140-160 and 177-197; these read ILIG…ANFA and ILMI…QMAI. Glu202 contacts Zn(2+).

Belongs to the peptidase M48B family. It depends on Zn(2+) as a cofactor.

The protein localises to the cell inner membrane. The protein is Protease HtpX homolog of Campylobacter hominis (strain ATCC BAA-381 / DSM 21671 / CCUG 45161 / LMG 19568 / NCTC 13146 / CH001A).